A 238-amino-acid polypeptide reads, in one-letter code: 1-(5-phosphoribosyl)-5-[(5-phosphoribosylamino)methylideneamino] imidazole-4-carboxamide isomerase (238 aa).

The active-site Proton acceptor is Asp-8. Asp-130 serves as the catalytic Proton donor.

Belongs to the HisA/HisF family.

It is found in the cytoplasm. It carries out the reaction 1-(5-phospho-beta-D-ribosyl)-5-[(5-phospho-beta-D-ribosylamino)methylideneamino]imidazole-4-carboxamide = 5-[(5-phospho-1-deoxy-D-ribulos-1-ylimino)methylamino]-1-(5-phospho-beta-D-ribosyl)imidazole-4-carboxamide. Its pathway is amino-acid biosynthesis; L-histidine biosynthesis; L-histidine from 5-phospho-alpha-D-ribose 1-diphosphate: step 4/9. This chain is 1-(5-phosphoribosyl)-5-[(5-phosphoribosylamino)methylideneamino] imidazole-4-carboxamide isomerase, found in Methanococcus maripaludis (strain C6 / ATCC BAA-1332).